Consider the following 146-residue polypeptide: 3-dehydroquinate dehydratase (146 aa).

Residue tyrosine 22 is the Proton acceptor of the active site. Residues asparagine 73, histidine 79, and aspartate 86 each contribute to the substrate site. The active-site Proton donor is the histidine 99. Residues 100 to 101 (LS) and arginine 110 contribute to the substrate site.

It belongs to the type-II 3-dehydroquinase family. In terms of assembly, homododecamer.

It catalyses the reaction 3-dehydroquinate = 3-dehydroshikimate + H2O. It participates in metabolic intermediate biosynthesis; chorismate biosynthesis; chorismate from D-erythrose 4-phosphate and phosphoenolpyruvate: step 3/7. Its function is as follows. Catalyzes a trans-dehydration via an enolate intermediate. The sequence is that of 3-dehydroquinate dehydratase from Parasynechococcus marenigrum (strain WH8102).